We begin with the raw amino-acid sequence, 392 residues long: uncharacterized protein (392 aa).

The protein belongs to the peptidase M24 family.

This is an uncharacterized protein from Sinorhizobium fredii (strain NBRC 101917 / NGR234).